The following is a 245-amino-acid chain: MTNPKKIEMVNDFQQQFAKKMNELGFTYSNIDLYQQAFSHSSFINDFNMDRLAHNERLEFLGDAVLELTVSRYLFDKHPDLPEGNLTKMRATIVCEPSLVIFANKIELNQLILLGKGEEKTGGRTRPSLVSDAFEAFVGALYLDQGLDVVWQFAEKVIFPYVEDDELVGVVDFKTQFQEYVHSQNRGDVTYRLIKEEGPAHHRLFTSEVILENEAVATGQGKTKKESEQKAAESAYSKLKSNNNL.

The region spanning 17–146 (FAKKMNELGF…FVGALYLDQG (130 aa)) is the RNase III domain. Residue Glu-59 coordinates Mg(2+). Asp-63 is a catalytic residue. Mg(2+)-binding residues include Asp-132 and Glu-135. Glu-135 is an active-site residue. One can recognise a DRBM domain in the interval 172-241 (DFKTQFQEYV…AESAYSKLKS (70 aa)). A disordered region spans residues 217-245 (ATGQGKTKKESEQKAAESAYSKLKSNNNL).

Belongs to the ribonuclease III family. Homodimer. Mg(2+) is required as a cofactor.

It localises to the cytoplasm. The catalysed reaction is Endonucleolytic cleavage to 5'-phosphomonoester.. Digests double-stranded RNA. Involved in the processing of primary rRNA transcript to yield the immediate precursors to the large and small rRNAs (23S and 16S). Processes some mRNAs, and tRNAs when they are encoded in the rRNA operon. Processes pre-crRNA and tracrRNA of type II CRISPR loci if present in the organism. This is Ribonuclease 3 from Staphylococcus haemolyticus (strain JCSC1435).